A 265-amino-acid chain; its full sequence is Hydroxyethylthiazole kinase (265 aa).

Methionine 44 is a substrate binding site. Lysine 120 and threonine 166 together coordinate ATP. Glycine 193 is a binding site for substrate.

Belongs to the Thz kinase family. Mg(2+) is required as a cofactor.

It carries out the reaction 5-(2-hydroxyethyl)-4-methylthiazole + ATP = 4-methyl-5-(2-phosphooxyethyl)-thiazole + ADP + H(+). The protein operates within cofactor biosynthesis; thiamine diphosphate biosynthesis; 4-methyl-5-(2-phosphoethyl)-thiazole from 5-(2-hydroxyethyl)-4-methylthiazole: step 1/1. Catalyzes the phosphorylation of the hydroxyl group of 4-methyl-5-beta-hydroxyethylthiazole (THZ). The chain is Hydroxyethylthiazole kinase from Clostridium novyi (strain NT).